Consider the following 96-residue polypeptide: Protein YdfX (96 aa).

This Escherichia coli (strain K12) protein is Protein YdfX (ydfX).